The following is a 1207-amino-acid chain: DNA-directed RNA polymerase subunit beta' (1207 aa).

Zn(2+) is bound by residues cysteine 60, cysteine 62, cysteine 75, and cysteine 78. Residues aspartate 450, aspartate 452, and aspartate 454 each contribute to the Mg(2+) site. Residues cysteine 818, cysteine 892, cysteine 899, and cysteine 902 each contribute to the Zn(2+) site.

Belongs to the RNA polymerase beta' chain family. The RNAP catalytic core consists of 2 alpha, 1 beta, 1 beta' and 1 omega subunit. When a sigma factor is associated with the core the holoenzyme is formed, which can initiate transcription. The cofactor is Mg(2+). Zn(2+) serves as cofactor.

The catalysed reaction is RNA(n) + a ribonucleoside 5'-triphosphate = RNA(n+1) + diphosphate. Functionally, DNA-dependent RNA polymerase catalyzes the transcription of DNA into RNA using the four ribonucleoside triphosphates as substrates. This chain is DNA-directed RNA polymerase subunit beta', found in Lactococcus lactis subsp. cremoris (strain SK11).